A 405-amino-acid chain; its full sequence is Tyrosine--tRNA ligase (405 aa).

Residue Tyr-35 coordinates L-tyrosine. Residues 40–49 (ATSSSLHIGH) carry the 'HIGH' region motif. L-tyrosine-binding residues include Tyr-166 and Gln-170. The 'KMSKS' region motif lies at 226–230 (KMGKS). Lys-229 is an ATP binding site. Positions 340–405 (ILLVDLMLDS…GKKKFLRIVI (66 aa)) constitute an S4 RNA-binding domain.

It belongs to the class-I aminoacyl-tRNA synthetase family. TyrS type 1 subfamily. In terms of assembly, homodimer.

The protein resides in the cytoplasm. It catalyses the reaction tRNA(Tyr) + L-tyrosine + ATP = L-tyrosyl-tRNA(Tyr) + AMP + diphosphate + H(+). In terms of biological role, catalyzes the attachment of tyrosine to tRNA(Tyr) in a two-step reaction: tyrosine is first activated by ATP to form Tyr-AMP and then transferred to the acceptor end of tRNA(Tyr). In Borreliella burgdorferi (strain ATCC 35210 / DSM 4680 / CIP 102532 / B31) (Borrelia burgdorferi), this protein is Tyrosine--tRNA ligase.